The chain runs to 196 residues: Peptidyl-tRNA hydrolase (196 aa).

Tyr-19 provides a ligand contact to tRNA. Residue His-24 is the Proton acceptor of the active site. TRNA is bound by residues Tyr-68, Asn-70, and Asn-116.

This sequence belongs to the PTH family. Monomer.

Its subcellular location is the cytoplasm. The catalysed reaction is an N-acyl-L-alpha-aminoacyl-tRNA + H2O = an N-acyl-L-amino acid + a tRNA + H(+). In terms of biological role, hydrolyzes ribosome-free peptidyl-tRNAs (with 1 or more amino acids incorporated), which drop off the ribosome during protein synthesis, or as a result of ribosome stalling. Its function is as follows. Catalyzes the release of premature peptidyl moieties from peptidyl-tRNA molecules trapped in stalled 50S ribosomal subunits, and thus maintains levels of free tRNAs and 50S ribosomes. The protein is Peptidyl-tRNA hydrolase of Aromatoleum aromaticum (strain DSM 19018 / LMG 30748 / EbN1) (Azoarcus sp. (strain EbN1)).